A 542-amino-acid chain; its full sequence is Calcium/calmodulin-dependent protein kinase type II subunit beta (542 aa).

Residues 14–272 (YQLYEDIGKG…AHEALKHPWV (259 aa)) enclose the Protein kinase domain. Tyr-17 carries the phosphotyrosine modification. ATP-binding positions include 20 to 28 (IGKGAFSVV) and Lys-43. Catalysis depends on Asp-136, which acts as the Proton acceptor. The tract at residues 283-292 (HRQETVECLK) is autoinhibitory domain. Thr-287 is subject to Phosphothreonine; by autocatalysis. The tract at residues 291-301 (LKKFNARRKLK) is calmodulin-binding. Thr-306 and Thr-307 each carry phosphothreonine; by autocatalysis. Residues 349–376 (ADGVKPQTNSTKNSSAITSPKGSLPPAA) are disordered. Positions 354 to 369 (PQTNSTKNSSAITSPK) are enriched in polar residues. 4 positions are modified to phosphoserine: Ser-367, Ser-371, Ser-394, and Ser-397. 2 positions are modified to phosphothreonine: Thr-400 and Thr-401.

The protein belongs to the protein kinase superfamily. CAMK Ser/Thr protein kinase family. CaMK subfamily. In terms of assembly, CAMK2 is composed of 4 different chains: alpha (CAMK2A), beta (CAMK2B), gamma (CAMK2G), and delta (CAMK2D). The different isoforms assemble into homo- or heteromultimeric holoenzymes composed of 12 subunits with two hexameric rings stacked one on top of the other. Interacts with SYNGAP1, CAMK2N2 and MPDZ. Interacts with FOXO3. Interacts (when in a kinase inactive state not associated with calmodulin) with ARC; leading to target ARC to inactive synapses. Interacts with CAMK2N1; this interaction requires CAMK2B activation by Ca(2+). Post-translationally, autophosphorylation of Thr-287 following activation by Ca(2+)/calmodulin. Phosphorylation of Thr-287 locks the kinase into an activated state.

It localises to the cytoplasm. The protein resides in the cytoskeleton. It is found in the microtubule organizing center. The protein localises to the centrosome. Its subcellular location is the sarcoplasmic reticulum membrane. It localises to the synapse. It carries out the reaction L-seryl-[protein] + ATP = O-phospho-L-seryl-[protein] + ADP + H(+). The enzyme catalyses L-threonyl-[protein] + ATP = O-phospho-L-threonyl-[protein] + ADP + H(+). Activated by Ca(2+)/calmodulin. Binding of calmodulin results in conformational change that relieves intrasteric autoinhibition and allows autophosphorylation of Thr-287 which turns the kinase in a constitutively active form and confers to the kinase a Ca(2+)-independent activity. In terms of biological role, calcium/calmodulin-dependent protein kinase that functions autonomously after Ca(2+)/calmodulin-binding and autophosphorylation, and is involved in dendritic spine and synapse formation, neuronal plasticity and regulation of sarcoplasmic reticulum Ca(2+) transport in skeletal muscle. In neurons, plays an essential structural role in the reorganization of the actin cytoskeleton during plasticity by binding and bundling actin filaments in a kinase-independent manner. This structural function is required for correct targeting of CaMK2A, which acts downstream of NMDAR to promote dendritic spine and synapse formation and maintain synaptic plasticity which enables long-term potentiation (LTP) and hippocampus-dependent learning. In developing hippocampal neurons, promotes arborization of the dendritic tree and in mature neurons, promotes dendritic remodeling. Also regulates the migration of developing neurons. Participates in the modulation of skeletal muscle function in response to exercise. In slow-twitch muscles, is involved in regulation of sarcoplasmic reticulum (SR) Ca(2+) transport and in fast-twitch muscle participates in the control of Ca(2+) release from the SR through phosphorylation of triadin, a ryanodine receptor-coupling factor, and phospholamban (PLN/PLB), an endogenous inhibitor of SERCA2A/ATP2A2. In response to interferon-gamma (IFN-gamma) stimulation, catalyzes phosphorylation of STAT1, stimulating the JAK-STAT signaling pathway. Phosphorylates reticulophagy regulator RETREG1 at 'Thr-134' under endoplasmic reticulum stress conditions which enhances RETREG1 oligomerization and its membrane scission and reticulophagy activity. The protein is Calcium/calmodulin-dependent protein kinase type II subunit beta (Camk2b) of Mus musculus (Mouse).